A 134-amino-acid polypeptide reads, in one-letter code: D-ribose pyranase (134 aa).

His-20 functions as the Proton donor in the catalytic mechanism. Substrate-binding positions include Asp-28, His-101, and 123 to 125; that span reads YCN.

This sequence belongs to the RbsD / FucU family. RbsD subfamily. In terms of assembly, homodecamer.

It localises to the cytoplasm. It carries out the reaction beta-D-ribopyranose = beta-D-ribofuranose. The protein operates within carbohydrate metabolism; D-ribose degradation; D-ribose 5-phosphate from beta-D-ribopyranose: step 1/2. Catalyzes the interconversion of beta-pyran and beta-furan forms of D-ribose. The sequence is that of D-ribose pyranase from Pseudomonas fluorescens (strain Pf0-1).